A 229-amino-acid polypeptide reads, in one-letter code: Cell division topological specificity factor homolog, chloroplastic (229 aa).

The transit peptide at 1–30 directs the protein to the chloroplast; that stretch reads MAMSSGTLRISATLVSPYHHHHRNRLSLPS. Residues 35 to 141 form an interaction with MIND1 region; it reads VDFTGFISNG…KMILFSDRCD (107 aa). The homodimerization stretch occupies residues 142–169; sequence VSDEAKRKIVNNIIHALSDFVEIESEEK.

It belongs to the MinE family. Homodimer. Interacts with MIND1. These interactions are required for proper intraplastidic localization. Binds to ARC3. As to expression, expressed in green tissues, especially at the shoot apex. Also present in leaves, stems, buds, and flowers, especially in sepals, siliques (tip and base), and anthers (mostly in pollen grains).

Its subcellular location is the plastid. It is found in the chloroplast. In terms of biological role, acts as a topological specificity factor during plastid division and specify plastid constriction sites (such as the Z-ring) in a MCD1-dependent manner. Especially involved in epidermal plastids division in a FTSZ1-dependent manner. Required for the proper formation of FtsZ rings at the division site in nongreen plastids (e.g. etioplasts). May contribute to gravitropism in stems and hypocotyls. Stimulates MIND1 ATPase activity. In cooperation with MIND1, prevents FtsZ ring formation anywhere outside of the mid-plastids. The polypeptide is Cell division topological specificity factor homolog, chloroplastic (Arabidopsis thaliana (Mouse-ear cress)).